A 378-amino-acid polypeptide reads, in one-letter code: Glutamate 5-kinase (378 aa).

Lys-19 serves as a coordination point for ATP. Substrate-binding residues include Ser-59, Asp-146, and Asn-158. Residue 178 to 179 (TD) coordinates ATP. Residues 285–363 (RGSVAVDAGA…SEFERLLGYT (79 aa)) enclose the PUA domain.

The protein belongs to the glutamate 5-kinase family.

The protein localises to the cytoplasm. The enzyme catalyses L-glutamate + ATP = L-glutamyl 5-phosphate + ADP. Its pathway is amino-acid biosynthesis; L-proline biosynthesis; L-glutamate 5-semialdehyde from L-glutamate: step 1/2. Catalyzes the transfer of a phosphate group to glutamate to form L-glutamate 5-phosphate. The polypeptide is Glutamate 5-kinase (Polaromonas sp. (strain JS666 / ATCC BAA-500)).